The following is a 256-amino-acid chain: MALPDFSMRQLLEAGVHFGHQTHRWNPKMAPFIYGERNNIHILDLSQTVPLLNSALKVVSDTVARGGRVLYVGTKRQASDIIADAGNRSAQYYVNARWLGGMMTNWKTISNSIQRLRKLDELLAGEAQGFTKKERLNLEREREKLDRALGGIKDMGSVPDLMFIIDTNKEAIAIQEAKRLGIPVVAVIDSNCDPDQIDYPIPGNDDAARAIALYCDLIARAALDGIARQQGAMGIDVGAQVEAPVEPALQAPAEGA.

It belongs to the universal ribosomal protein uS2 family.

The protein is Small ribosomal subunit protein uS2 of Brucella melitensis biotype 1 (strain ATCC 23456 / CCUG 17765 / NCTC 10094 / 16M).